A 78-amino-acid chain; its full sequence is Acyl carrier protein (78 aa).

The Carrier domain maps to 2–77; it reads SEIAQKVKSI…QAIAYLEQHV (76 aa). Residue Ser-37 is modified to O-(pantetheine 4'-phosphoryl)serine.

The protein belongs to the acyl carrier protein (ACP) family. 4'-phosphopantetheine is transferred from CoA to a specific serine of apo-ACP by AcpS. This modification is essential for activity because fatty acids are bound in thioester linkage to the sulfhydryl of the prosthetic group.

It is found in the cytoplasm. Its pathway is lipid metabolism; fatty acid biosynthesis. Functionally, carrier of the growing fatty acid chain in fatty acid biosynthesis. The protein is Acyl carrier protein of Cytophaga hutchinsonii (strain ATCC 33406 / DSM 1761 / CIP 103989 / NBRC 15051 / NCIMB 9469 / D465).